The following is a 162-amino-acid chain: Caveolin-2 (162 aa).

At 1–86 (MGLETEKADV…FEISKYVLYK (86 aa)) the chain is on the cytoplasmic side. Residue Y19 is modified to Phosphotyrosine; by SRC. Phosphoserine occurs at positions 20 and 23. Residues 87 to 107 (FLTVFLAIPLAFAAGVLFAVL) constitute an intramembrane region (helical). Topologically, residues 108–162 (SCLHIWILMPFVKTCLMVLPSVQTIWRSVTDVVIAPLCASIGRSFSSVGLQLSHD) are cytoplasmic.

It belongs to the caveolin family. Monomer or homodimer. Interacts with CAV1; the interaction forms a stable heterooligomeric complex that is required for targeting to lipid rafts and for caveolae formation. Tyrosine phosphorylated forms do not form heterooligomers with the Tyr-19-phosphorylated form existing as a monomer or dimer. Interacts (tyrosine phosphorylated form) with the SH2 domain-containing proteins, RASA1, NCK1 and SRC. Interacts (tyrosine phosphorylated form) with INSR. Interacts (Tyr-19 phosphorylated form) with MAPK1 (phosphorylated form); the interaction, promoted by insulin, leads to nuclear location and MAPK1 activation. Interacts with STAT3; the interaction is increased on insulin-induced tyrosine phosphorylation leading to STAT activation. Post-translationally, phosphorylated on serine and tyrosine residues. CAV1 promotes phosphorylation on Ser-23 which then targets the complex to the plasma membrane, lipid rafts and caveolae. Phosphorylation on Tyr-19 is required for insulin-induced phosphorylation of MAPK1 and DNA binding of STAT3. Tyrosine phosphorylation is induced by both EGF and insulin.

It is found in the nucleus. It localises to the cytoplasm. The protein resides in the golgi apparatus membrane. The protein localises to the cell membrane. Its subcellular location is the membrane. It is found in the caveola. Functionally, may act as a scaffolding protein within caveolar membranes. Interacts directly with G-protein alpha subunits and can functionally regulate their activity. Acts as an accessory protein in conjunction with CAV1 in targeting to lipid rafts and driving caveolae formation. Positive regulator of cellular mitogenesis of the MAPK signaling pathway. Required for the insulin-stimulated nuclear translocation and activation of MAPK1 and STAT3, and the subsequent regulation of cell cycle progression. In Oryctolagus cuniculus (Rabbit), this protein is Caveolin-2 (CAV2).